A 169-amino-acid polypeptide reads, in one-letter code: Cilia- and flagella-associated protein HOATZ (169 aa).

Disordered regions lie at residues 1–21 (METGPSEEPSGRKESQEMCPP), 52–89 (SQLVLRRDSSQRLPVARPRRSRGSENSHSSQSFHLASN), and 144–169 (KAKEHKAKKVVSESDKEDQEEVKTLD). The segment covering 75 to 89 (SENSHSSQSFHLASN) has biased composition (polar residues).

It belongs to the HOATZ family.

The protein localises to the cytoplasm. It localises to the cell projection. Its subcellular location is the cilium. Its function is as follows. Required for motile ciliogenesis and flagellar genesis by mediating the maturation of the glycolytic enzyme ENO4. This is Cilia- and flagella-associated protein HOATZ from Homo sapiens (Human).